A 350-amino-acid chain; its full sequence is Biotin synthase (350 aa).

The region spanning 54–278 (REIQLSTLLS…TMPQSYVRLS (225 aa)) is the Radical SAM core domain. Residues Cys69, Cys73, and Cys76 each contribute to the [4Fe-4S] cluster site. Residues Cys113, Cys144, Cys204, and Arg276 each contribute to the [2Fe-2S] cluster site.

This sequence belongs to the radical SAM superfamily. Biotin synthase family. As to quaternary structure, homodimer. Requires [4Fe-4S] cluster as cofactor. [2Fe-2S] cluster is required as a cofactor.

It carries out the reaction (4R,5S)-dethiobiotin + (sulfur carrier)-SH + 2 reduced [2Fe-2S]-[ferredoxin] + 2 S-adenosyl-L-methionine = (sulfur carrier)-H + biotin + 2 5'-deoxyadenosine + 2 L-methionine + 2 oxidized [2Fe-2S]-[ferredoxin]. It functions in the pathway cofactor biosynthesis; biotin biosynthesis; biotin from 7,8-diaminononanoate: step 2/2. Its function is as follows. Catalyzes the conversion of dethiobiotin (DTB) to biotin by the insertion of a sulfur atom into dethiobiotin via a radical-based mechanism. The protein is Biotin synthase of Neisseria gonorrhoeae (strain ATCC 700825 / FA 1090).